A 236-amino-acid polypeptide reads, in one-letter code: Sugar fermentation stimulation protein homolog (236 aa).

Belongs to the SfsA family.

This is Sugar fermentation stimulation protein homolog from Synechococcus elongatus (strain ATCC 33912 / PCC 7942 / FACHB-805) (Anacystis nidulans R2).